The primary structure comprises 318 residues: Cyclic AMP receptor-like protein F (318 aa).

Residues methionine 1 to aspartate 3 are Extracellular-facing. A helical transmembrane segment spans residues isoleucine 4–isoleucine 24. Over threonine 25 to asparagine 38 the chain is Cytoplasmic. The chain crosses the membrane as a helical span at residues phenylalanine 39–isoleucine 59. At phenylalanine 60–serine 83 the chain is on the extracellular side. A disulfide bridge links cysteine 81 with cysteine 177. Residues leucine 84–valine 104 form a helical membrane-spanning segment. Residues lysine 105–threonine 145 are Cytoplasmic-facing. A helical membrane pass occupies residues leucine 146–isoleucine 166. At serine 167–arginine 187 the chain is on the extracellular side. The chain crosses the membrane as a helical span at residues phenylalanine 188–isoleucine 208. Residues leucine 209–glutamate 234 lie on the Cytoplasmic side of the membrane. The chain crosses the membrane as a helical span at residues phenylalanine 235–valine 255. At leucine 256–threonine 267 the chain is on the extracellular side. A helical membrane pass occupies residues phenylalanine 268 to tryptophan 288. The Cytoplasmic segment spans residues alanine 289 to lysine 318.

The protein belongs to the G-protein coupled receptor 5 family.

Its subcellular location is the membrane. Receptor for cAMP. This chain is Cyclic AMP receptor-like protein F (crlF), found in Dictyostelium discoideum (Social amoeba).